Consider the following 354-residue polypeptide: Protein RecA (354 aa).

65 to 72 (GPESSGKT) is an ATP binding site.

It belongs to the RecA family.

The protein resides in the cytoplasm. Its function is as follows. Can catalyze the hydrolysis of ATP in the presence of single-stranded DNA, the ATP-dependent uptake of single-stranded DNA by duplex DNA, and the ATP-dependent hybridization of homologous single-stranded DNAs. It interacts with LexA causing its activation and leading to its autocatalytic cleavage. In Vibrio cholerae serotype O1 (strain ATCC 39315 / El Tor Inaba N16961), this protein is Protein RecA.